Reading from the N-terminus, the 278-residue chain is Large ribosomal subunit protein uL2 (278 aa).

The segment at G223–K278 is disordered. Residues T255 to K264 are compositionally biased toward basic residues.

The protein belongs to the universal ribosomal protein uL2 family. As to quaternary structure, part of the 50S ribosomal subunit. Forms a bridge to the 30S subunit in the 70S ribosome.

In terms of biological role, one of the primary rRNA binding proteins. Required for association of the 30S and 50S subunits to form the 70S ribosome, for tRNA binding and peptide bond formation. It has been suggested to have peptidyltransferase activity; this is somewhat controversial. Makes several contacts with the 16S rRNA in the 70S ribosome. The chain is Large ribosomal subunit protein uL2 from Lacticaseibacillus paracasei (strain ATCC 334 / BCRC 17002 / CCUG 31169 / CIP 107868 / KCTC 3260 / NRRL B-441) (Lactobacillus paracasei).